Consider the following 434-residue polypeptide: Putative ankyrin repeat protein FPV023 (434 aa).

ANK repeat units lie at residues Arg33–Ala62, Leu134–Phe163, Ile167–Ile197, Tyr201–Ser230, Ile236–Ile265, Ala269–Ile299, and Asn303–Ile330.

This chain is Putative ankyrin repeat protein FPV023, found in Fowlpox virus (strain NVSL) (FPV).